The sequence spans 241 residues: Trypsin-10 (241 aa).

Residues 1 to 13 form the signal peptide; the sequence is MKSLIFVLLLGAV. Residues 14–19 constitute a propeptide, activation peptide; the sequence is FAEEDK. The Peptidase S1 domain occupies 20 to 239; that stretch reads IVGGYECTRH…LSGWVRDTMA (220 aa). 6 cysteine pairs are disulfide-bonded: C26/C155, C44/C60, C128/C228, C135/C201, C166/C180, and C191/C215. Residues H59 and D103 each act as charge relay system in the active site. The active-site Charge relay system is the S195.

The protein belongs to the peptidase S1 family.

The protein localises to the secreted. The protein resides in the extracellular space. The enzyme catalyses Preferential cleavage: Arg-|-Xaa, Lys-|-Xaa.. The polypeptide is Trypsin-10 (Gadus morhua (Atlantic cod)).